Here is a 236-residue protein sequence, read N- to C-terminus: MSKNSKAYREAAAKIDAGREYTPLQAAELVKETSSKNFDASVDVAIRLGVDPRKADQLVRGTVSLPNGTGKTVRVAVFAAGEKATEAEAAGADFVGTDELVERIQGGWTDFDVAIATPDQMAKIGRIARVLGPRGLMPNPKTGTVTNDVAKAIEEVKGGKISFRVDKASNLHAAIGKASFDAKALAENYGALIDELLRIKPSSSKGIYLKKITMSSTTGPGVAVDTHITKNYTAEA.

It belongs to the universal ribosomal protein uL1 family. Part of the 50S ribosomal subunit.

Functionally, binds directly to 23S rRNA. The L1 stalk is quite mobile in the ribosome, and is involved in E site tRNA release. In terms of biological role, protein L1 is also a translational repressor protein, it controls the translation of the L11 operon by binding to its mRNA. The protein is Large ribosomal subunit protein uL1 of Corynebacterium efficiens (strain DSM 44549 / YS-314 / AJ 12310 / JCM 11189 / NBRC 100395).